Consider the following 193-residue polypeptide: Acyl-homoserine-lactone synthase (193 aa).

It belongs to the autoinducer synthase family.

It carries out the reaction a fatty acyl-[ACP] + S-adenosyl-L-methionine = an N-acyl-L-homoserine lactone + S-methyl-5'-thioadenosine + holo-[ACP] + H(+). Required for the synthesis of OHHL (N-(3-oxohexanoyl)-L-homoserine lactone) also known as VAI or N-(beta-ketocaproyl)homoserine lactone or 3-oxo-N-(tetrahydro-2-oxo-3-furanyl)-hexanamide, an autoinducer molecule which binds to LuxR and thus acts in bioluminescence regulation. In Aliivibrio fischeri (Vibrio fischeri), this protein is Acyl-homoserine-lactone synthase (luxI).